Consider the following 564-residue polypeptide: Urease subunit alpha (564 aa).

In terms of domain architecture, Urease spans G126–F564. Residues H131, H133, and K214 each contribute to the Ni(2+) site. K214 carries the post-translational modification N6-carboxylysine. H216 provides a ligand contact to substrate. Positions 243 and 269 each coordinate Ni(2+). H317 functions as the Proton donor in the catalytic mechanism. Ni(2+) is bound at residue D357.

Belongs to the metallo-dependent hydrolases superfamily. Urease alpha subunit family. In terms of assembly, heterotrimer of UreA (gamma), UreB (beta) and UreC (alpha) subunits. Three heterotrimers associate to form the active enzyme. Requires Ni cation as cofactor. In terms of processing, carboxylation allows a single lysine to coordinate two nickel ions.

It localises to the cytoplasm. The enzyme catalyses urea + 2 H2O + H(+) = hydrogencarbonate + 2 NH4(+). Its pathway is nitrogen metabolism; urea degradation; CO(2) and NH(3) from urea (urease route): step 1/1. The protein is Urease subunit alpha of Burkholderia thailandensis (strain ATCC 700388 / DSM 13276 / CCUG 48851 / CIP 106301 / E264).